The following is a 125-amino-acid chain: Large ribosomal subunit protein bL12 (125 aa).

It belongs to the bacterial ribosomal protein bL12 family. Homodimer. Part of the ribosomal stalk of the 50S ribosomal subunit. Forms a multimeric L10(L12)X complex, where L10 forms an elongated spine to which 2 to 4 L12 dimers bind in a sequential fashion. Binds GTP-bound translation factors.

Functionally, forms part of the ribosomal stalk which helps the ribosome interact with GTP-bound translation factors. Is thus essential for accurate translation. The polypeptide is Large ribosomal subunit protein bL12 (Afipia carboxidovorans (strain ATCC 49405 / DSM 1227 / KCTC 32145 / OM5) (Oligotropha carboxidovorans)).